Here is a 756-residue protein sequence, read N- to C-terminus: Lysyl oxidase homolog 4 (756 aa).

The first 24 residues, 1-24 (MAWSPPATLFLFLLLLGQPPPSRP), serve as a signal peptide directing secretion. 4 SRCR domains span residues 32–133 (LRLV…VICH), 159–287 (VRLK…VSCV), 311–411 (VRLR…VRCN), and 421–529 (VRLA…VSCM). 17 cysteine pairs are disulfide-bonded: Cys-58/Cys-122, Cys-71/Cys-132, Cys-102/Cys-112, Cys-191/Cys-276, Cys-204/Cys-286, Cys-251/Cys-261, Cys-336/Cys-400, Cys-349/Cys-410, Cys-380/Cys-390, Cys-450/Cys-515, Cys-463/Cys-528, Cys-497/Cys-507, Cys-558/Cys-564, Cys-610/Cys-658, Cys-642/Cys-648, Cys-670/Cys-680, and Cys-717/Cys-731. N-linked (GlcNAc...) asparagine glycosylation occurs at Asn-198. The interval 533-736 (PDLVMNAQLV…WLHNCHTGNS (204 aa)) is lysyl-oxidase like. Cu cation contacts are provided by His-611, His-613, and His-615. N-linked (GlcNAc...) asparagine glycosylation occurs at Asn-629. The lysine tyrosylquinone (Lys-Tyr) cross-link spans 638–674 (KASFCLEDTNCPTGLQRRYACANFGEQGVTVGCWDTY). A 2',4',5'-topaquinone modification is found at Tyr-674.

The protein belongs to the lysyl oxidase family. Requires Cu cation as cofactor. Lysine tyrosylquinone residue is required as a cofactor. Post-translationally, the lysine tyrosylquinone cross-link (LTQ) is generated by condensation of the epsilon-amino group of a lysine with a topaquinone produced by oxidation of tyrosine. In terms of processing, may be proteolytically cleaved by BMP1. In terms of tissue distribution, expressed in many tissues, the highest levels among the tissues studied being in the skeletal muscle, testis and pancreas. Expressed in cartilage.

It localises to the secreted. The protein localises to the extracellular space. The enzyme catalyses L-lysyl-[protein] + O2 + H2O = (S)-2-amino-6-oxohexanoyl-[protein] + H2O2 + NH4(+). Inhibited by beta-aminopropionitrile (BAPN). Catalyzes the oxidative deamination of lysine and hydroxylysine residues in collagen and elastin, resulting in the formation of covalent cross-linkages, and the stabilization of collagen and elastin fibers. The polypeptide is Lysyl oxidase homolog 4 (LOXL4) (Homo sapiens (Human)).